Here is a 319-residue protein sequence, read N- to C-terminus: Putative olfactory receptor 52L2 (319 aa).

The Extracellular portion of the chain corresponds to 1-43; sequence MNLDSFFSFLLKSLIMALSNSSWRLPQPSFFLVGIPGLEESQH. N20 carries N-linked (GlcNAc...) asparagine glycosylation. The helical transmembrane segment at 44-64 threads the bilayer; it reads WIALPLGILYLLALVGNVTIL. The Cytoplasmic portion of the chain corresponds to 65–72; sequence FIIWMDPS. The chain crosses the membrane as a helical span at residues 73-93; it reads LHQSMYLFLSMLAAIDLVVAS. Over 94 to 117 the chain is Extracellular; the sequence is STAPKALAVLLVRAQEIGYTVCLI. Cysteines 115 and 207 form a disulfide. Residues 118–138 form a helical membrane-spanning segment; it reads QMFFTHAFSSMESGVLVAMAL. Residues 139 to 157 are Cytoplasmic-facing; the sequence is DRYVAICHPLHHSTILHPG. A helical transmembrane segment spans residues 158–178; it reads VIGHIGMVVLVRGLLLLIPFL. Over 179–214 the chain is Extracellular; it reads ILLRKLIFCQATIIGHAYCEHMAVVKLACSETTVNR. A helical transmembrane segment spans residues 215–235; the sequence is AYGLTVALLVVGLDVLAIGVS. Residues 236 to 255 lie on the Cytoplasmic side of the membrane; that stretch reads YAHILQAVLKVPGNEARLKA. The helical transmembrane segment at 256–276 threads the bilayer; sequence FSTCGSHVCVILVFYIPGMFS. At 277-291 the chain is on the extracellular side; the sequence is FLTHRFGHHVPHHVH. A helical transmembrane segment spans residues 292–312; it reads VLLAILYRLVPPALNPLVYRV. Residues 313–319 are Cytoplasmic-facing; that stretch reads KTQKIHQ.

This sequence belongs to the G-protein coupled receptor 1 family.

It is found in the cell membrane. Functionally, odorant receptor. The polypeptide is Putative olfactory receptor 52L2 (OR52L2P) (Homo sapiens (Human)).